Consider the following 210-residue polypeptide: Cell division protein SepF (210 aa).

The interval G13–P101 is disordered. Composition is skewed to basic and acidic residues over residues E22–E70 and V83–P93.

The protein belongs to the SepF family. Homodimer. Interacts with FtsZ.

The protein localises to the cytoplasm. Cell division protein that is part of the divisome complex and is recruited early to the Z-ring. Probably stimulates Z-ring formation, perhaps through the cross-linking of FtsZ protofilaments. Its function overlaps with FtsA. This Micrococcus luteus (strain ATCC 4698 / DSM 20030 / JCM 1464 / CCM 169 / CCUG 5858 / IAM 1056 / NBRC 3333 / NCIMB 9278 / NCTC 2665 / VKM Ac-2230) (Micrococcus lysodeikticus) protein is Cell division protein SepF.